We begin with the raw amino-acid sequence, 159 residues long: Ribosomal RNA large subunit methyltransferase H (159 aa).

Residues Leu76, Gly108, and 127 to 132 contribute to the S-adenosyl-L-methionine site; that span reads FSKMTF.

Belongs to the RNA methyltransferase RlmH family. Homodimer.

It localises to the cytoplasm. It carries out the reaction pseudouridine(1915) in 23S rRNA + S-adenosyl-L-methionine = N(3)-methylpseudouridine(1915) in 23S rRNA + S-adenosyl-L-homocysteine + H(+). In terms of biological role, specifically methylates the pseudouridine at position 1915 (m3Psi1915) in 23S rRNA. This is Ribosomal RNA large subunit methyltransferase H from Bacillus subtilis (strain 168).